Consider the following 313-residue polypeptide: Intelectin-1 (313 aa).

An N-terminal signal peptide occupies residues 1–18; that stretch reads MNQLSFLLFLIATTRGWS. A Fibrinogen C-terminal domain is found at 32-255; the sequence is SSSPSLPRSC…AANALCAGMR (224 aa). Residues cysteine 41 and cysteine 70 are joined by a disulfide bond. Ca(2+) contacts are provided by histidine 86, glutamate 87, aspartate 89, glycine 92, glycine 97, aspartate 98, and aspartate 133. 3 cysteine pairs are disulfide-bonded: cysteine 94-cysteine 280, cysteine 199-cysteine 259, and cysteine 251-cysteine 265. N-linked (GlcNAc...) asparagine glycosylation occurs at asparagine 163. Residues asparagine 260, glutamate 262, glutamate 274, and aspartate 282 each coordinate Ca(2+). Residues 262–263 and glutamate 274 contribute to the a carbohydrate site; that span reads EH. A lipid anchor (GPI-anchor amidated serine) is attached at serine 298. Residues 299–313 constitute a propeptide that is removed on maturation; it reads SSREITEAAVLLFYR.

In terms of assembly, homotrimer; disulfide-linked. May interact with LTF. Post-translationally, N-glycosylated. In terms of tissue distribution, highly expressed in omental adipose tissue where it is found in stromal vascular cells but not in fat cells but is barely detectable in subcutaneous adipose tissue (at protein level). Highly expressed in the small intestine. Also found in the heart, testis, colon, salivary gland, skeletal muscle, pancreas and thyroid and, to a lesser degree, in the uterus, spleen, prostate, lymph node and thymus.

The protein localises to the cell membrane. It localises to the secreted. Lectin that specifically recognizes microbial carbohydrate chains in a calcium-dependent manner. Binds to microbial glycans that contain a terminal acyclic 1,2-diol moiety, including beta-linked D-galactofuranose (beta-Galf), D-phosphoglycerol-modified glycans, D-glycero-D-talo-oct-2-ulosonic acid (KO) and 3-deoxy-D-manno-oct-2-ulosonic acid (KDO). Binds to glycans from Gram-positive and Gram-negative bacteria, including K.pneumoniae, S.pneumoniae, Y.pestis, P.mirabilis and P.vulgaris. Does not bind human glycans. Probably plays a role in the defense system against microorganisms. May function as adipokine that has no effect on basal glucose uptake but enhances insulin-stimulated glucose uptake in adipocytes. Increases AKT phosphorylation in the absence and presence of insulin. May interact with lactoferrin/LTF and increase its uptake, and may thereby play a role in iron absorption. The chain is Intelectin-1 (ITLN1) from Homo sapiens (Human).